Consider the following 233-residue polypeptide: Protein Mis18-alpha (233 aa).

Residues serine 36, serine 39, and serine 40 each carry the phosphoserine modification. One can recognise a Mis18 domain in the interval 80-178 (PLVFLCSGCR…SVEAIESYVL (99 aa)). Cysteine 85, cysteine 88, cysteine 141, and cysteine 144 together coordinate Zn(2+). A Glycyl lysine isopeptide (Lys-Gly) (interchain with G-Cter in SUMO2) cross-link involves residue lysine 162. Serine 233 carries the post-translational modification Phosphoserine.

It belongs to the mis18 family. In terms of assembly, homodimer, and heterodimer with OIP5/MIS18B. Identified in a complex containing MIS18A, OIP5/MIS18B, MIS18BP1, RBBP7 and RBBP4. As to expression, detected in testis.

It is found in the nucleus. The protein resides in the chromosome. It localises to the centromere. In terms of biological role, required for recruitment of CENPA to centromeres and normal chromosome segregation during mitosis. In Homo sapiens (Human), this protein is Protein Mis18-alpha (MIS18A).